The following is a 240-amino-acid chain: Transcription factor bHLH101 (240 aa).

The bHLH domain maps to 65–117; it reads EKKLNHNASERDRRRKLNALYSSLRALLPLSDQKRKLSIPMTVARVVKYIPEQ.

Homodimer. In terms of tissue distribution, flowers.

It is found in the nucleus. This Arabidopsis thaliana (Mouse-ear cress) protein is Transcription factor bHLH101 (BHLH101).